Here is a 275-residue protein sequence, read N- to C-terminus: AA9 family lytic polysaccharide monooxygenase AA9-X282 (275 aa).

The signal sequence occupies residues 1–17 (MFTKLIIAASLAASVAA). Position 18 (histidine 18) interacts with Cu(2+). The residue at position 20 (threonine 20) is a Phosphothreonine. Phosphoserine occurs at positions 43 and 49. Residue threonine 50 is modified to Phosphothreonine. Residue serine 58 is modified to Phosphoserine. Cysteine 66 and cysteine 185 are disulfide-bonded. A Cu(2+)-binding site is contributed by histidine 96. The residue at position 130 (serine 130) is a Phosphoserine. 2 residues coordinate O2: histidine 171 and glutamine 180. Tyrosine 182 serves as a coordination point for Cu(2+). The tract at residues 236–265 (TSPAVANTPYPTTATWNTALQPSTVPTAVP) is X282 extension. Residues 268–275 (GTPGIGKA) carry the 9res motif motif.

It belongs to the polysaccharide monooxygenase AA9 family. Cu(2+) is required as a cofactor.

Its subcellular location is the secreted. The enzyme catalyses [(1-&gt;4)-beta-D-glucosyl]n+m + reduced acceptor + O2 = 4-dehydro-beta-D-glucosyl-[(1-&gt;4)-beta-D-glucosyl]n-1 + [(1-&gt;4)-beta-D-glucosyl]m + acceptor + H2O.. Its function is as follows. Lytic polysaccharide monooxygenase (LPMO) that depolymerizes crystalline and amorphous polysaccharides via the oxidation of scissile alpha- or beta-(1-4)-glycosidic bonds, yielding C1 oxidation products. Catalysis by LPMOs requires the reduction of the active-site copper from Cu(II) to Cu(I) by a reducing agent and H(2)O(2) or O(2) as a cosubstrate. Shows only weak binding properties to cellulose, and low cellulolytic oxidative activity which questions the involvement of X282 extension-containing AA9 proteins in the degradation of plant cell wall and opens new avenues as to the divergence of function of some AA9 members. This is AA9 family lytic polysaccharide monooxygenase AA9-X282 from Trametes coccinea (strain BRFM310) (Pycnoporus coccineus).